The primary structure comprises 424 residues: Serine--tRNA ligase (424 aa).

232–234 (TAE) contributes to the L-serine binding site. 263–265 (RKE) contributes to the ATP binding site. Residue Glu-286 participates in L-serine binding. 350–353 (EISS) serves as a coordination point for ATP. Residue Ser-386 participates in L-serine binding.

This sequence belongs to the class-II aminoacyl-tRNA synthetase family. Type-1 seryl-tRNA synthetase subfamily. Homodimer. The tRNA molecule binds across the dimer.

It is found in the cytoplasm. It carries out the reaction tRNA(Ser) + L-serine + ATP = L-seryl-tRNA(Ser) + AMP + diphosphate + H(+). It catalyses the reaction tRNA(Sec) + L-serine + ATP = L-seryl-tRNA(Sec) + AMP + diphosphate + H(+). Its pathway is aminoacyl-tRNA biosynthesis; selenocysteinyl-tRNA(Sec) biosynthesis; L-seryl-tRNA(Sec) from L-serine and tRNA(Sec): step 1/1. Functionally, catalyzes the attachment of serine to tRNA(Ser). Is also able to aminoacylate tRNA(Sec) with serine, to form the misacylated tRNA L-seryl-tRNA(Sec), which will be further converted into selenocysteinyl-tRNA(Sec). This chain is Serine--tRNA ligase, found in Thermodesulfovibrio yellowstonii (strain ATCC 51303 / DSM 11347 / YP87).